Reading from the N-terminus, the 171-residue chain is S-ribosylhomocysteine lyase (171 aa).

Fe cation contacts are provided by H54, H58, and C128.

The protein belongs to the LuxS family. Homodimer. Fe cation is required as a cofactor.

The enzyme catalyses S-(5-deoxy-D-ribos-5-yl)-L-homocysteine = (S)-4,5-dihydroxypentane-2,3-dione + L-homocysteine. Involved in the synthesis of autoinducer 2 (AI-2) which is secreted by bacteria and is used to communicate both the cell density and the metabolic potential of the environment. The regulation of gene expression in response to changes in cell density is called quorum sensing. Catalyzes the transformation of S-ribosylhomocysteine (RHC) to homocysteine (HC) and 4,5-dihydroxy-2,3-pentadione (DPD). In Proteus mirabilis (strain HI4320), this protein is S-ribosylhomocysteine lyase.